The chain runs to 1001 residues: Translation initiation factor IF-2 (1001 aa).

Positions 56–418 are disordered; it reads PDYVHDPNAV…VEAGPPPISR (363 aa). Positions 70 to 84 are enriched in basic and acidic residues; sequence TEAHEERHEHEEAHE. Low complexity predominate over residues 85–108; that stretch reads PAAAPKAAVEPETPVAPAPEAAPA. Positions 109–120 are enriched in basic and acidic residues; sequence AKEERPAPEEPA. 6 stretches are compositionally biased toward pro residues: residues 136-170, 180-194, 204-217, 229-252, 305-322, and 345-357; these read IHPP…PHAP, PARP…PSQT, RPAP…PTTT, QPFP…PPQQ, PAAP…PVPG, and GMPP…PRPQ. The span at 379-410 shows a compositional bias: basic and acidic residues; sequence SRGRPGDRRPVRQQRERTEEEKILRPQRRHVE. Residues 499 to 668 enclose the tr-type G domain; sequence RRAPVVTIMG…LLVADMQDLK (170 aa). The interval 508 to 515 is G1; that stretch reads GHVDHGKT. Residue 508–515 coordinates GTP; that stretch reads GHVDHGKT. A G2 region spans residues 533–537; it reads GITQH. The tract at residues 554-557 is G3; that stretch reads DTPG. GTP contacts are provided by residues 554–558 and 608–611; these read DTPGH and NKID. The G4 stretch occupies residues 608–611; it reads NKID. A G5 region spans residues 644-646; the sequence is SAR.

Belongs to the TRAFAC class translation factor GTPase superfamily. Classic translation factor GTPase family. IF-2 subfamily.

The protein resides in the cytoplasm. In terms of biological role, one of the essential components for the initiation of protein synthesis. Protects formylmethionyl-tRNA from spontaneous hydrolysis and promotes its binding to the 30S ribosomal subunits. Also involved in the hydrolysis of GTP during the formation of the 70S ribosomal complex. This is Translation initiation factor IF-2 from Solibacter usitatus (strain Ellin6076).